Here is a 546-residue protein sequence, read N- to C-terminus: Phosphomethylpyrimidine synthase (546 aa).

Substrate contacts are provided by residues asparagine 145, methionine 174, tyrosine 203, histidine 239, 259-261, 300-303, and glutamate 339; these read SRG and DGLR. Residue histidine 343 coordinates Zn(2+). Substrate is bound at residue tyrosine 366. A Zn(2+)-binding site is contributed by histidine 407. [4Fe-4S] cluster-binding residues include cysteine 487, cysteine 490, and cysteine 495.

Belongs to the ThiC family. [4Fe-4S] cluster serves as cofactor.

It catalyses the reaction 5-amino-1-(5-phospho-beta-D-ribosyl)imidazole + S-adenosyl-L-methionine = 4-amino-2-methyl-5-(phosphooxymethyl)pyrimidine + CO + 5'-deoxyadenosine + formate + L-methionine + 3 H(+). The protein operates within cofactor biosynthesis; thiamine diphosphate biosynthesis. Catalyzes the synthesis of the hydroxymethylpyrimidine phosphate (HMP-P) moiety of thiamine from aminoimidazole ribotide (AIR) in a radical S-adenosyl-L-methionine (SAM)-dependent reaction. This chain is Phosphomethylpyrimidine synthase, found in Mycobacterium marinum (strain ATCC BAA-535 / M).